A 233-amino-acid chain; its full sequence is Protein DEHYDRATION-INDUCED 19 homolog 2 (233 aa).

The tract at residues 176-215 is disordered; sequence DLHSDSSDNNFLLNKFPDDKTAERAEPSLSEKDQKERAQR. Positions 191 to 214 are enriched in basic and acidic residues; it reads FPDDKTAERAEPSLSEKDQKERAQ.

It belongs to the Di19 family.

The protein is Protein DEHYDRATION-INDUCED 19 homolog 2 (DI19-2) of Oryza sativa subsp. japonica (Rice).